A 179-amino-acid polypeptide reads, in one-letter code: Putative endogenous retrovirus group FC1 Env polyprotein (179 aa).

Positions 1–22 are cleaved as a signal peptide; that stretch reads MARPSPLCLLLLLTLLPPIVPS. A truncated surface protein region spans residues 23-179; it reads NSLLTEPPFR…SKLRIFRTYV (157 aa). Asparagine 69 carries an N-linked (GlcNAc...) asparagine glycan.

This sequence belongs to the gamma type-C retroviral envelope protein family. HERV class-I F(c)1 env subfamily.

It is found in the virion. In terms of biological role, retroviral envelope proteins mediate receptor recognition and membrane fusion during early infection. Endogenous envelope proteins may have kept, lost or modified their original function during evolution. This is Putative endogenous retrovirus group FC1 Env polyprotein (ERVFC1) from Gorilla gorilla gorilla (Western lowland gorilla).